Consider the following 179-residue polypeptide: Insulin-like growth factor 2 (179 aa).

The first 24 residues, 1–24, serve as a signal peptide directing secretion; it reads MGITAGKSVLVLLAFLAFASCCYA. Positions 25–52 are b; sequence AYRPSETLCGGELVDTLQFVCGDRGFYF. Intrachain disulfides connect Cys-33–Cys-71, Cys-45–Cys-84, and Cys-70–Cys-75. The c stretch occupies residues 53–64; sequence SRPSSRINRRSR. Positions 65 to 85 are a; the sequence is GIVEECCFRSCDLALLETYCA. Residues 86–91 form a d region; sequence TPAKSE. A propeptide spans 92-179 (e peptide); sequence RDVSASTTVL…GGASSKASSD (88 aa). O-linked (GalNAc...) threonine glycosylation is present at Thr-106. O-linked (GalNAc...) serine glycosylation is present at Ser-154. The segment at 160–179 is disordered; sequence ALPTQDPATHGGASSKASSD. O-linked (GalNAc...) threonine glycosylation occurs at Thr-163.

It belongs to the insulin family. Interacts with MYORG; this interaction is required for IGF2 secretion. Interacts with integrins ITGAV:ITGB3 and ITGA6:ITGB4; integrin-binding is required for IGF2 signaling. Interacts with IGFBP2. Proteolytically processed by PCSK4, proIGF2 is cleaved at Arg-128 and Arg-92 to generate big-IGF2 and mature IGF2.

It is found in the secreted. Its function is as follows. The insulin-like growth factors possess growth-promoting activity. Major fetal growth hormone in mammals. Plays a key role in regulating fetoplacental development. IGF2 is influenced by placental lactogen. Also involved in tissue differentiation. In adults, involved in glucose metabolism in adipose tissue, skeletal muscle and liver. Acts as a ligand for integrin which is required for IGF2 signaling. Positively regulates myogenic transcription factor MYOD1 function by facilitating the recruitment of transcriptional coactivators, thereby controlling muscle terminal differentiation. Inhibits myoblast differentiation and modulates metabolism via increasing the mitochondrial respiration rate. Preptin undergoes glucose-mediated co-secretion with insulin, and acts as a physiological amplifier of glucose-mediated insulin secretion. Exhibits osteogenic properties by increasing osteoblast mitogenic activity through phosphoactivation of MAPK1 and MAPK3. The protein is Insulin-like growth factor 2 of Bos taurus (Bovine).